Consider the following 223-residue polypeptide: Deoxyribose-phosphate aldolase (223 aa).

D89 functions as the Proton donor/acceptor in the catalytic mechanism. Residue K152 is the Schiff-base intermediate with acetaldehyde of the active site. K181 serves as the catalytic Proton donor/acceptor.

This sequence belongs to the DeoC/FbaB aldolase family. DeoC type 1 subfamily.

Its subcellular location is the cytoplasm. The catalysed reaction is 2-deoxy-D-ribose 5-phosphate = D-glyceraldehyde 3-phosphate + acetaldehyde. The protein operates within carbohydrate degradation; 2-deoxy-D-ribose 1-phosphate degradation; D-glyceraldehyde 3-phosphate and acetaldehyde from 2-deoxy-alpha-D-ribose 1-phosphate: step 2/2. Functionally, catalyzes a reversible aldol reaction between acetaldehyde and D-glyceraldehyde 3-phosphate to generate 2-deoxy-D-ribose 5-phosphate. The sequence is that of Deoxyribose-phosphate aldolase from Listeria innocua serovar 6a (strain ATCC BAA-680 / CLIP 11262).